A 139-amino-acid chain; its full sequence is Holo-[acyl-carrier-protein] synthase (139 aa).

Residues Asp-8 and Glu-57 each coordinate Mg(2+).

Belongs to the P-Pant transferase superfamily. AcpS family. Mg(2+) is required as a cofactor.

The protein resides in the cytoplasm. It catalyses the reaction apo-[ACP] + CoA = holo-[ACP] + adenosine 3',5'-bisphosphate + H(+). Functionally, transfers the 4'-phosphopantetheine moiety from coenzyme A to a Ser of acyl-carrier-protein. The sequence is that of Holo-[acyl-carrier-protein] synthase from Sinorhizobium fredii (strain NBRC 101917 / NGR234).